The following is a 528-amino-acid chain: Calcium-dependent protein kinase 13 (528 aa).

The N-myristoyl glycine moiety is linked to residue glycine 2. Basic and acidic residues predominate over residues 17–32 (KSNYSGHDHARKDAAG). Residues 17 to 37 (KSNYSGHDHARKDAAGGKKSA) form a disordered region. The residue at position 43 (serine 43) is a Phosphoserine. In terms of domain architecture, Protein kinase spans 54–312 (YLLDRELGRG…AKQVLEHPWI (259 aa)). ATP-binding positions include 60-68 (LGRGEFGVT) and lysine 83. The active-site Proton acceptor is aspartate 178. Serine 218 carries the phosphoserine modification. The autoinhibitory domain stretch occupies residues 318-348 (APNVPLGDVVKSRLKQFSVMNRFKRKALRVI). EF-hand domains are found at residues 355–390 (EEVE…FSTQ), 391–426 (LAES…LQKV), 427–462 (ANDE…DGGD), and 463–498 (DCVD…GTDW). Residues aspartate 368, aspartate 370, aspartate 372, glutamate 379, aspartate 404, threonine 410, glutamate 415, aspartate 440, aspartate 442, asparagine 444, tyrosine 446, glutamate 451, aspartate 476, aspartate 478, aspartate 480, and arginine 482 each contribute to the Ca(2+) site. The residue at position 484 (serine 484) is a Phosphoserine. Glutamate 487 lines the Ca(2+) pocket. Serine 522 bears the Phosphoserine mark.

Belongs to the protein kinase superfamily. Ser/Thr protein kinase family. CDPK subfamily.

The protein resides in the cell membrane. The enzyme catalyses L-seryl-[protein] + ATP = O-phospho-L-seryl-[protein] + ADP + H(+). The catalysed reaction is L-threonyl-[protein] + ATP = O-phospho-L-threonyl-[protein] + ADP + H(+). With respect to regulation, activated by calcium. Autophosphorylation may play an important role in the regulation of the kinase activity. Functionally, may play a role in signal transduction pathways that involve calcium as a second messenger. The chain is Calcium-dependent protein kinase 13 (CPK13) from Arabidopsis thaliana (Mouse-ear cress).